Reading from the N-terminus, the 319-residue chain is Acetyl esterase (319 aa).

The Involved in the stabilization of the negatively charged intermediate by the formation of the oxyanion hole motif lies at H91–G93. Catalysis depends on residues S165, D262, and H292.

It belongs to the 'GDXG' lipolytic enzyme family. Homodimer. Interacts with MalT and MelA.

It localises to the cytoplasm. Displays esterase activity towards short chain fatty esters (acyl chain length of up to 8 carbons). Able to hydrolyze triacetylglycerol (triacetin) and tributyrylglycerol (tributyrin), but not trioleylglycerol (triolein) or cholesterol oleate. Negatively regulates MalT activity by antagonizing maltotriose binding. Inhibits MelA galactosidase activity. This chain is Acetyl esterase, found in Escherichia coli O6:H1 (strain CFT073 / ATCC 700928 / UPEC).